Reading from the N-terminus, the 124-residue chain is Orexigenic neuropeptide QRFP (124 aa).

Positions 1–17 (MRCLCSWLCLLLPLSAC) are cleaved as a signal peptide. A propeptide spanning residues 18-79 (FPLLDRRGPT…REHTGFRLGR (62 aa)) is cleaved from the precursor. The segment at 63-100 (KEQQASRREHTGFRLGRQDSGSEATGFLPTDSEKASGP) is disordered. Position 80 is a pyrrolidone carboxylic acid (Gln80). Phe122 bears the Phenylalanine amide mark.

The protein belongs to the RFamide neuropeptide family. As to quaternary structure, ligand for the G-protein coupled receptor QRFPR/GPR103. In terms of tissue distribution, expressed in the brain with highest expression levels in the hypothalamus and optic nerve. Also expressed in the trachea and mammary gland.

The protein resides in the secreted. In terms of biological role, stimulates feeding and grooming behavior, metabolic rate and locomotor activity and increases blood pressure. May have orexigenic activity. May promote aldosterone secretion by the adrenal gland. The polypeptide is Orexigenic neuropeptide QRFP (Qrfp) (Rattus norvegicus (Rat)).